A 277-amino-acid chain; its full sequence is S-formylglutathione hydrolase FrmB (277 aa).

Residues Ser145, Asp221, and His254 each act as charge relay system in the active site.

It belongs to the esterase D family.

The enzyme catalyses S-formylglutathione + H2O = formate + glutathione + H(+). Serine hydrolase involved in the detoxification of formaldehyde. Hydrolyzes S-formylglutathione to glutathione and formate. This is S-formylglutathione hydrolase FrmB (frmB) from Escherichia coli O6:K15:H31 (strain 536 / UPEC).